The primary structure comprises 130 residues: Small ribosomal subunit protein uS9 (130 aa).

It belongs to the universal ribosomal protein uS9 family.

The sequence is that of Small ribosomal subunit protein uS9 from Acidovorax ebreus (strain TPSY) (Diaphorobacter sp. (strain TPSY)).